The following is a 94-amino-acid chain: MLRLDLQFFASKKGVGSTKNGRDSESKRLGAKRADGQFVTGGSILYRQRGTKIYPGENVGRGGDDTLFAKIDGAVKFERFGRDRKKVSVYPVAQ.

Positions 1–9 are excised as a propeptide; sequence MLRLDLQFF.

This sequence belongs to the bacterial ribosomal protein bL27 family. In terms of processing, the N-terminus is cleaved by ribosomal processing cysteine protease Prp.

The polypeptide is Large ribosomal subunit protein bL27 (Bacillus velezensis (strain DSM 23117 / BGSC 10A6 / LMG 26770 / FZB42) (Bacillus amyloliquefaciens subsp. plantarum)).